Here is a 276-residue protein sequence, read N- to C-terminus: uncharacterized protein (276 aa).

This is an uncharacterized protein from Methanocaldococcus jannaschii (strain ATCC 43067 / DSM 2661 / JAL-1 / JCM 10045 / NBRC 100440) (Methanococcus jannaschii).